Here is a 158-residue protein sequence, read N- to C-terminus: Snaclec agglucetin subunit alpha-2 (158 aa).

Positions 1-23 are cleaved as a signal peptide; that stretch reads MGRFIFVSFGLLVVFLSLSGTGA. 3 cysteine pairs are disulfide-bonded: cysteine 27–cysteine 38, cysteine 55–cysteine 152, and cysteine 127–cysteine 144. The C-type lectin domain occupies 34-153; the sequence is YDQYCYQVIK…CIQLNPFVCK (120 aa).

The protein belongs to the snaclec family. In terms of assembly, heterotetramer of the subunits alpha-1, alpha-2, beta-1 and beta-2; disulfide-linked. In terms of tissue distribution, expressed by the venom gland.

The protein localises to the secreted. Its function is as follows. Agglucetin specifically causes platelet aggregation and surface exposure of integrin alpha-IIb/beta-3 with a GPIb-(GP1BA-) dependent manner in washed platelets. It binds to human platelets in a saturable manner, and its binding is specifically blocked by anti-GP Ib mAb. It regulates endothelial cell survival and promotes angiogenesis by activating integrin alpha-v/beta-3 signaling through FAK/phosphatidylinositol 3-kinase (PI3K)/Akt pathway. This Deinagkistrodon acutus (Hundred-pace snake) protein is Snaclec agglucetin subunit alpha-2.